The chain runs to 856 residues: DNA mismatch repair protein MutS (856 aa).

Gly-611 to Ser-618 provides a ligand contact to ATP.

It belongs to the DNA mismatch repair MutS family.

In terms of biological role, this protein is involved in the repair of mismatches in DNA. It is possible that it carries out the mismatch recognition step. This protein has a weak ATPase activity. The sequence is that of DNA mismatch repair protein MutS from Histophilus somni (strain 129Pt) (Haemophilus somnus).